The chain runs to 462 residues: Glycine--tRNA ligase (462 aa).

The substrate site is built by arginine 98 and glutamate 174. ATP is bound by residues 206–208, 216–221, 290–291, and 334–337; these read RNE, FRTREF, EL, and GADR. 221–225 is a binding site for substrate; that stretch reads FEQME. A substrate-binding site is contributed by 330 to 334; it reads EPSLG.

It belongs to the class-II aminoacyl-tRNA synthetase family. Homodimer.

Its subcellular location is the cytoplasm. The enzyme catalyses tRNA(Gly) + glycine + ATP = glycyl-tRNA(Gly) + AMP + diphosphate. Functionally, catalyzes the attachment of glycine to tRNA(Gly). This chain is Glycine--tRNA ligase, found in Lachnospira eligens (strain ATCC 27750 / DSM 3376 / VPI C15-48 / C15-B4) (Eubacterium eligens).